The sequence spans 68 residues: Riparin-1.5 amide (68 aa).

The first 15 residues, 1-15, serve as a signal peptide directing secretion; it reads MKIIVVLAVLMLVSA. Residues 16–41 constitute a propeptide that is removed on maturation; the sequence is QVCLVSAAEMGHSSDNELSSRDLVKR. C47 and C53 are oxidised to a cystine. C53 is modified (cysteine amide). Residues 57-68 constitute a propeptide that is removed on maturation; sequence SIESSEGANGGE.

As to expression, expressed by the skin glands.

It is found in the secreted. This Crinia riparia (Streambank froglet) protein is Riparin-1.5 amide.